Here is a 513-residue protein sequence, read N- to C-terminus: 2-isopropylmalate synthase (513 aa).

The 264-residue stretch at 5–268 (LIIFDTTLRD…DIGVDTTQIV (264 aa)) folds into the Pyruvate carboxyltransferase domain. Mn(2+) contacts are provided by D14, H202, H204, and N239. The interval 394-513 (RFISLSQRSE…KAVQKINPQI (120 aa)) is regulatory domain.

The protein belongs to the alpha-IPM synthase/homocitrate synthase family. LeuA type 1 subfamily. As to quaternary structure, homodimer. Mn(2+) serves as cofactor.

Its subcellular location is the cytoplasm. It carries out the reaction 3-methyl-2-oxobutanoate + acetyl-CoA + H2O = (2S)-2-isopropylmalate + CoA + H(+). Its pathway is amino-acid biosynthesis; L-leucine biosynthesis; L-leucine from 3-methyl-2-oxobutanoate: step 1/4. Catalyzes the condensation of the acetyl group of acetyl-CoA with 3-methyl-2-oxobutanoate (2-ketoisovalerate) to form 3-carboxy-3-hydroxy-4-methylpentanoate (2-isopropylmalate). This is 2-isopropylmalate synthase from Cupriavidus necator (strain ATCC 17699 / DSM 428 / KCTC 22496 / NCIMB 10442 / H16 / Stanier 337) (Ralstonia eutropha).